The following is a 270-amino-acid chain: 4-hydroxy-tetrahydrodipicolinate reductase (270 aa).

NAD(+) contacts are provided by residues 9-14 (GAGGRM) and E35. R36 contributes to the NADP(+) binding site. NAD(+) contacts are provided by residues 99 to 101 (GTT) and 123 to 126 (ASNY). Residue H156 is the Proton donor/acceptor of the active site. H157 is a binding site for (S)-2,3,4,5-tetrahydrodipicolinate. Residue K160 is the Proton donor of the active site. A (S)-2,3,4,5-tetrahydrodipicolinate-binding site is contributed by 166 to 167 (GT).

Belongs to the DapB family.

The protein localises to the cytoplasm. It carries out the reaction (S)-2,3,4,5-tetrahydrodipicolinate + NAD(+) + H2O = (2S,4S)-4-hydroxy-2,3,4,5-tetrahydrodipicolinate + NADH + H(+). It catalyses the reaction (S)-2,3,4,5-tetrahydrodipicolinate + NADP(+) + H2O = (2S,4S)-4-hydroxy-2,3,4,5-tetrahydrodipicolinate + NADPH + H(+). The protein operates within amino-acid biosynthesis; L-lysine biosynthesis via DAP pathway; (S)-tetrahydrodipicolinate from L-aspartate: step 4/4. Functionally, catalyzes the conversion of 4-hydroxy-tetrahydrodipicolinate (HTPA) to tetrahydrodipicolinate. In Histophilus somni (strain 129Pt) (Haemophilus somnus), this protein is 4-hydroxy-tetrahydrodipicolinate reductase.